The sequence spans 735 residues: Alpha-adducin (735 aa).

Met1 carries the post-translational modification N-acetylmethionine. The segment covering 1–11 (MNGDTRAAVVT) has biased composition (low complexity). Residues 1–21 (MNGDTRAAVVTSPPPTTAPHK) form a disordered region. Residue Ser12 is modified to Phosphoserine. Ser59 is subject to Phosphoserine; by PKA. Ser64 is modified (phosphoserine). Thr331 carries the phosphothreonine modification. Ser334, Ser353, and Ser355 each carry phosphoserine. Residue Thr358 is modified to Phosphothreonine. A phosphoserine mark is found at Ser364 and Ser366. A Phosphoserine; by PKA modification is found at Ser408. Disordered stretches follow at residues 418 to 486 (GHSF…SAVP) and 576 to 735 (RREV…KSDS). The residue at position 427 (Ser427) is a Phosphoserine. A Phosphothreonine modification is found at Thr429. A Phosphoserine modification is found at Ser431. At Ser436 the chain carries Phosphoserine; by PKA. Thr445 carries the post-translational modification Phosphothreonine; by ROCK2. Phosphoserine is present on residues Ser464 and Ser465. Thr480 is subject to Phosphothreonine; by ROCK2. Ser481 carries the phosphoserine; by PKA modification. A compositionally biased stretch (basic and acidic residues) spans 576–601 (RREVERKQKGSEENLDETREQKEKSP). A phosphoserine mark is found at Ser586, Ser600, and Ser605. Residue Thr610 is modified to Phosphothreonine. Ser613 is subject to Phosphoserine. At Thr614 the chain carries Phosphothreonine. Residues 678–712 (EPASASAPGAEEVASPATEEGSPMDPGSDGSPGKS) are compositionally biased toward low complexity. 3 positions are modified to phosphoserine: Ser705, Ser708, and Ser712. The span at 713–735 (PSKKKKKFRTPSFLKKSKKKSDS) shows a compositional bias: basic residues. A Phosphoserine; by PKC modification is found at Ser714. The interaction with calmodulin stretch occupies residues 715–732 (KKKKKFRTPSFLKKSKKK). Ser724 is subject to Phosphoserine; by PKA and PKC.

Belongs to the aldolase class II family. Adducin subfamily. In terms of assembly, heterodimer of an alpha and a beta subunit or an alpha and a gamma subunit.

The protein resides in the cytoplasm. The protein localises to the cytoskeleton. It is found in the cell membrane. In terms of biological role, membrane-cytoskeleton-associated protein that promotes the assembly of the spectrin-actin network. Binds to calmodulin. This is Alpha-adducin (Add1) from Rattus norvegicus (Rat).